The following is a 699-amino-acid chain: Elongation factor G (699 aa).

The 283-residue stretch at 8 to 290 (NKYRNLGIMA…KVIELLPSPV (283 aa)) folds into the tr-type G domain. GTP is bound by residues 17–24 (AHIDAGKT), 88–92 (DTPGH), and 142–145 (NKMD).

Belongs to the TRAFAC class translation factor GTPase superfamily. Classic translation factor GTPase family. EF-G/EF-2 subfamily.

It is found in the cytoplasm. In terms of biological role, catalyzes the GTP-dependent ribosomal translocation step during translation elongation. During this step, the ribosome changes from the pre-translocational (PRE) to the post-translocational (POST) state as the newly formed A-site-bound peptidyl-tRNA and P-site-bound deacylated tRNA move to the P and E sites, respectively. Catalyzes the coordinated movement of the two tRNA molecules, the mRNA and conformational changes in the ribosome. The protein is Elongation factor G of Dichelobacter nodosus (strain VCS1703A).